Consider the following 2034-residue polypeptide: Sperm vesicle fusion protein fer-1 (2034 aa).

The segment at 1–80 (MTVKEKLLKV…GGSDIELLPD (80 aa)) is disordered. The Cytoplasmic portion of the chain corresponds to 1-1998 (MTVKEKLLKV…CIKYFWHYYG (1998 aa)). A compositionally biased stretch (acidic residues) spans 66–79 (ELSDDGGSDIELLP). 4 consecutive C2 domains span residues 229 to 367 (RIDE…YLPT), 954 to 1082 (DSED…PQWF), 1120 to 1246 (YKER…KSDH), and 1363 to 1484 (KKGK…ATGG). The segment at 1563–1619 (QKAGKENFSDGSDQQNEDVSDGSWDEEDLEREKEKLKWEKHRSKGKPLKKVTTEKAE) is disordered. Residues 1577–1591 (QNEDVSDGSWDEEDL) show a composition bias toward acidic residues. Over residues 1600 to 1611 (WEKHRSKGKPLK) the composition is skewed to basic residues. The region spanning 1684-1831 (EYGAIPAPFN…EGIGSPSDVG (148 aa)) is the C2 5 domain. Residues 1953–1972 (QEPAGKKRSEPNHSPFLEKP) form a disordered region. Residues 1999–2019 (LQILLWLIIIVILILTIFVLL) form a helical membrane-spanning segment. At 2020 to 2034 (HTWPTILAEIIKAIF) the chain is on the extracellular side.

It belongs to the ferlin family. As to expression, exclusively expressed in the testis.

It localises to the membrane. Functionally, required for the fusion of the membranous organelles (MOs) with the plasma membrane, a process essential in spermiogenesis. The sequence is that of Sperm vesicle fusion protein fer-1 (fer-1) from Caenorhabditis elegans.